Consider the following 264-residue polypeptide: SPRY domain-containing SOCS box protein 2 (264 aa).

The span at 1–18 (MGQTALARGSSSTPSSHA) shows a compositional bias: polar residues. A disordered region spans residues 1 to 53 (MGQTALARGSSSTPSSHALYSDLSPPEGLEELLSAPPPDLGAQRHHGWNPKDC). Residues 21–34 (SDLSPPEGLEELLS) show a composition bias toward low complexity. The region spanning 26–221 (PEGLEELLSA…VRIRYLGERR (196 aa)) is the B30.2/SPRY domain. The 43-residue stretch at 222-264 (AEEPQSLLHLSRLCVRHALGDTRLGQISSLPLPPAMKRYLLYK) folds into the SOCS box domain.

It belongs to the SPSB family. As to quaternary structure, component of the probable ECS(SPSB2) E3 ubiquitin-protein ligase complex which contains CUL5, RNF7/RBX2, Elongin BC complex and SPSB2. Interacts with CUL5, RNF7, ELOB and ELOC. Interacts with MET. Interacts (via B30.2/SPRY domain) with PAWR; this interaction occurs in association with the Elongin BC complex. Interacts with NOS2.

It is found in the cytoplasm. The protein resides in the cytosol. The protein operates within protein modification; protein ubiquitination. In terms of biological role, substrate recognition component of a SCF-like ECS (Elongin BC-CUL2/5-SOCS-box protein) E3 ubiquitin-protein ligase complex which mediates the ubiquitination and subsequent proteasomal degradation of target proteins. Negatively regulates nitric oxide (NO) production and limits cellular toxicity in activated macrophages by mediating the ubiquitination and proteasomal degradation of NOS2. Acts as a bridge which links NOS2 with the ECS E3 ubiquitin ligase complex components ELOC and CUL5. This Rattus norvegicus (Rat) protein is SPRY domain-containing SOCS box protein 2 (Spsb2).